We begin with the raw amino-acid sequence, 478 residues long: Proline--tRNA ligase (478 aa).

Belongs to the class-II aminoacyl-tRNA synthetase family. ProS type 3 subfamily. In terms of assembly, homodimer.

It localises to the cytoplasm. It carries out the reaction tRNA(Pro) + L-proline + ATP = L-prolyl-tRNA(Pro) + AMP + diphosphate. Its function is as follows. Catalyzes the attachment of proline to tRNA(Pro) in a two-step reaction: proline is first activated by ATP to form Pro-AMP and then transferred to the acceptor end of tRNA(Pro). This is Proline--tRNA ligase from Clostridium botulinum (strain Loch Maree / Type A3).